Here is a 185-residue protein sequence, read N- to C-terminus: ATP synthase subunit b (185 aa).

Residues 28–48 (VVLVGFAVLMYIVVKFVVPMF) traverse the membrane as a helical segment.

Belongs to the ATPase B chain family. As to quaternary structure, F-type ATPases have 2 components, F(1) - the catalytic core - and F(0) - the membrane proton channel. F(1) has five subunits: alpha(3), beta(3), gamma(1), delta(1), epsilon(1). F(0) has three main subunits: a(1), b(2) and c(10-14). The alpha and beta chains form an alternating ring which encloses part of the gamma chain. F(1) is attached to F(0) by a central stalk formed by the gamma and epsilon chains, while a peripheral stalk is formed by the delta and b chains.

Its subcellular location is the cell membrane. In terms of biological role, f(1)F(0) ATP synthase produces ATP from ADP in the presence of a proton or sodium gradient. F-type ATPases consist of two structural domains, F(1) containing the extramembraneous catalytic core and F(0) containing the membrane proton channel, linked together by a central stalk and a peripheral stalk. During catalysis, ATP synthesis in the catalytic domain of F(1) is coupled via a rotary mechanism of the central stalk subunits to proton translocation. Component of the F(0) channel, it forms part of the peripheral stalk, linking F(1) to F(0). The chain is ATP synthase subunit b from Paenarthrobacter aurescens (strain TC1).